Reading from the N-terminus, the 395-residue chain is Elongation factor Tu (395 aa).

Residues 10 to 205 (KPHVNIGTIG…CDTWIPLPPR (196 aa)) form the tr-type G domain. Residues 19–26 (GHVDHGKT) are G1. Residue 19-26 (GHVDHGKT) coordinates GTP. Position 26 (Thr-26) interacts with Mg(2+). The segment at 60-64 (GITIN) is G2. A G3 region spans residues 81–84 (DCPG). GTP is bound by residues 81–85 (DCPGH) and 136–139 (NKCD). The tract at residues 136–139 (NKCD) is G4. The segment at 174–176 (SAL) is G5.

Belongs to the TRAFAC class translation factor GTPase superfamily. Classic translation factor GTPase family. EF-Tu/EF-1A subfamily. As to quaternary structure, monomer.

It is found in the cytoplasm. It catalyses the reaction GTP + H2O = GDP + phosphate + H(+). In terms of biological role, GTP hydrolase that promotes the GTP-dependent binding of aminoacyl-tRNA to the A-site of ribosomes during protein biosynthesis. The chain is Elongation factor Tu from Parabacteroides distasonis (strain ATCC 8503 / DSM 20701 / CIP 104284 / JCM 5825 / NCTC 11152).